Here is a 143-residue protein sequence, read N- to C-terminus: Transcriptional regulator MraZ (143 aa).

2 SpoVT-AbrB domains span residues 5–47 (EYHH…SMEE) and 76–119 (AMES…AKER).

Belongs to the MraZ family. As to quaternary structure, forms oligomers.

Its subcellular location is the cytoplasm. The protein resides in the nucleoid. In Lactobacillus helveticus (strain DPC 4571), this protein is Transcriptional regulator MraZ.